A 311-amino-acid chain; its full sequence is Olfactory receptor 52J3 (311 aa).

At 1 to 27 (MFYHNKSIFHPVTFFLIGIPGLEDFHM) the chain is on the extracellular side. Asn-5 carries an N-linked (GlcNAc...) asparagine glycan. A helical transmembrane segment spans residues 28–48 (WISGPFCSVYLVALLGNATIL). Residues 49 to 56 (LVIKVEQT) lie on the Cytoplasmic side of the membrane. A helical membrane pass occupies residues 57 to 77 (LREPMFYFLAILSTIDLALST). Over 78–101 (TSVPRMLGIFWFDAHEINYGACVA) the chain is Extracellular. A disulfide bridge connects residues Cys-99 and Cys-191. The chain crosses the membrane as a helical span at residues 102–122 (QMFLIHAFTGMEAEVLLAMAF). The Cytoplasmic portion of the chain corresponds to 123–141 (DRYVAVCAPLHYATILTSQ). Residues 142–162 (VLVGISMCIVIRPVLLTLPMV) form a helical membrane-spanning segment. At 163–198 (YLIYRLPFCQAHIIAHSYCEHMGIAKLSCGNIRING) the chain is on the extracellular side. The helical transmembrane segment at 199–218 (IYGLFVVSFFVLNLVLIGIS) threads the bilayer. Over 219 to 238 (YVYILRAVFRLPSHDAQLKA) the chain is Cytoplasmic. The helical transmembrane segment at 239–259 (LSTCGAHVGVICVFYIPSVFS) threads the bilayer. The Extracellular portion of the chain corresponds to 260–274 (FLTHRFGHQIPGYIH). The helical transmembrane segment at 275–295 (ILVANLYLIIPPSLNPIIYGV) threads the bilayer. The Cytoplasmic segment spans residues 296–311 (RTKQIRERVLYVFTKK).

This sequence belongs to the G-protein coupled receptor 1 family.

Its subcellular location is the cell membrane. Functionally, odorant receptor. This chain is Olfactory receptor 52J3 (OR52J3), found in Homo sapiens (Human).